The sequence spans 323 residues: Small ribosomal subunit protein mS35 (323 aa).

The tract at residues 31 to 59 (PVPTPSLPERTPGNERPPRRKALPPRTEK) is disordered. Residues 257 to 321 (SSERNILETL…YKESVKRLLN (65 aa)) adopt a coiled-coil conformation.

This sequence belongs to the mitochondrion-specific ribosomal protein mS35 family. Component of the mitochondrial small ribosomal subunit (mt-SSU). Mature mammalian 55S mitochondrial ribosomes consist of a small (28S) and a large (39S) subunit. The 28S small subunit contains a 12S ribosomal RNA (12S mt-rRNA) and 30 different proteins. The 39S large subunit contains a 16S rRNA (16S mt-rRNA), a copy of mitochondrial valine transfer RNA (mt-tRNA(Val)), which plays an integral structural role, and 52 different proteins.

It is found in the mitochondrion. In Homo sapiens (Human), this protein is Small ribosomal subunit protein mS35.